The following is a 243-amino-acid chain: R-spondin-2 (243 aa).

The signal sequence occupies residues 1–21; it reads MQFQLFSFALIILNCVDYSHC. 11 cysteine pairs are disulfide-bonded: Cys40/Cys46, Cys43/Cys52, Cys55/Cys74, Cys78/Cys93, Cys96/Cys104, Cys101/Cys110, Cys113/Cys124, Cys128/Cys141, Cys145/Cys187, Cys156/Cys163, and Cys196/Cys203. An FU repeat occupies 90–134; that stretch reads MNRCSRCRIENCDSCFSRDFCIKCKSGFYSLKGQCFEECPEGFAP. One can recognise a TSP type-1 domain in the interval 144-204; that stretch reads GCEVGPWSEW…RCKMAIRHCP (61 aa). Residue Asn160 is glycosylated (N-linked (GlcNAc...) asparagine). Basic residues predominate over residues 204–224; sequence PGGKRTTKKKDKRNKKKKKKL. The interval 204 to 243 is disordered; that stretch reads PGGKRTTKKKDKRNKKKKKKLLERAQEQHSVVLATDRSSQ.

Belongs to the R-spondin family. In terms of assembly, binds heparin.

The protein resides in the secreted. Its function is as follows. Activator of the canonical Wnt signaling pathway by acting as a ligand for lgr4-6 receptors. Upon binding to lgr4-6 (lgr4, lgr5 or lgr6), lgr4-6 associate with phosphorylated lrp6 and frizzled receptors that are activated by extracellular Wnt receptors, triggering the canonical Wnt signaling pathway to increase expression of target genes. Acts both in the canonical Wnt/beta-catenin-dependent pathway and in non-canonical Wnt signaling pathway. Activates neural markers and promotes muscle formation. Overexpression blocks activin, nodal and BMP4 signaling, suggesting that it may negatively regulate the TGF-beta pathway. During embryonic development, plays a crucial role in limb specification, amplifying the Wnt signaling pathway independently of LGR4-6 receptors, possibly by acting as a direct antagonistic ligand to RNF43 and ZNRF3, hence governing the number of limbs an embryo should form. The chain is R-spondin-2 (rspo2) from Xenopus laevis (African clawed frog).